The primary structure comprises 3685 residues: Dystrophin (3685 aa).

An actin-binding region spans residues 1 to 240 (MLWWEEVEDC…YITSLFQVLP (240 aa)). Calponin-homology (CH) domains are found at residues 15-119 (DVQK…LHWQ) and 134-240 (TNSE…QVLP). Residues 63 to 72 (PKEKGSTRVH) are ANK2- and ANK-3 binding. Spectrin repeat units lie at residues 339–447 (VNLD…NLHR), 448–556 (VLMD…LLQD), 559–667 (LKWQ…QISQ), 719–828 (EIRK…WLEY), 830–934 (NNII…ELQT), 943–1045 (RYQE…KLEE), 1048–1154 (NKLR…ALKG), 1157–1263 (EKTV…TLEE), 1266–1367 (ACWH…LLEQ), 1368–1463 (SIQS…LFQK), 1468–1568 (EQRL…QLEK), 1571–1676 (KLSR…LLLE), 1679–1778 (KHME…KASI), 1779–1874 (PLKE…KALE), 1877–1979 (HQWY…TVRE), 1992–2101 (EISY…RFDR), 2104–2208 (EKWR…RLEE), 2211–2318 (NILS…EIEA), 2319–2423 (QIKD…LRAK), 2475–2577 (FNRA…QLNE), 2580–2686 (KDST…ALEE), 2689–2802 (RLLQ…HLEA), 2808–2930 (KRLH…RKID), and 2935–3040 (RLRE…QLHE). Asn340 carries the post-translational modification Phosphothreonine. Tyr344 and Leu348 each carry phosphoserine. Phosphothreonine occurs at positions 519, 616, and 629. The interaction with SYNM stretch occupies residues 1415 to 1913 (SDLTSHEISL…PEPRDERKIK (499 aa)). Residues 3055 to 3088 (TSVQGPWERAISPNKVPYYINHETQTTCWDHPKM) enclose the WW domain. The interaction with SYNM stretch occupies residues 3058–3408 (QGPWERAISP…TVLEGDNMET (351 aa)). The segment at 3308-3364 (KHQAKCNICKECPIIGFRYRSLKHFNYDICQSCFFSGRVAKGHKMHYPMVEYCTPTT) adopts a ZZ-type; degenerate zinc-finger fold. The Zn(2+) site is built by Cys3313, Cys3316, Cys3337, and Cys3340. The tract at residues 3466–3518 (DDEHLLIQHYCQSLNQDSPLSQPRSPAQILISLESEERGELERILADLEEENR) is binds to SNTB1. A phosphoserine mark is found at Ser3483, Ser3490, and Ser3500. Disordered regions lie at residues 3528 to 3554 (KQQH…QSPR) and 3603 to 3685 (EAKV…EDTM). 2 stretches are compositionally biased toward polar residues: residues 3607–3626 (NGTT…SSQP) and 3662–3673 (QLNNSFPSSRGR). Residues Ser3612, Ser3613, Ser3617, Ser3623, Ser3624, and Ser3666 each carry the phosphoserine modification.

As to quaternary structure, interacts with SYNM. Interacts with the syntrophins SNTA1, SNTB1, SNTB2, SNTG1 and SNTG2. Interacts with KRT19. Component of the dystrophin-associated glycoprotein complex which is composed of three subcomplexes: a cytoplasmic complex comprised of DMD (or UTRN), DTNA and a number of syntrophins, such as SNTB1, SNTB2, SNTG1 and SNTG2, the transmembrane dystroglycan complex, and the sarcoglycan-sarcospan complex. Interacts with DAG1 (betaDAG1) with DMD; the interaction is inhibited by phosphorylation on the PPXY motif of DAG1. Interacts with CMYA5. Directly interacts with ANK2 and ANK3; these interactions do not interfere with betaDAG1-binding and are necessary for proper localization in muscle cells. Identified in a dystroglycan complex that contains at least PRX, DRP2, UTRN, DMD and DAG1. Interacts with DTNB. Interacts with PGM5; the interaction is direct. Interacts with NOS1; localizes NOS1 to sarcolemma in muscle cells. As to expression, expressed in muscle fibers accumulating in the costameres of myoplasm at the sarcolemma. Expressed in brain, muscle, kidney, lung and testis. Most tissues contain transcripts of multiple isoforms. Isoform 15: Only isoform to be detected in heart and liver and is also expressed in brain, testis and hepatoma cells.

The protein localises to the cell membrane. The protein resides in the sarcolemma. It is found in the cytoplasm. Its subcellular location is the cytoskeleton. It localises to the postsynaptic cell membrane. In terms of biological role, anchors the extracellular matrix to the cytoskeleton via F-actin. Ligand for dystroglycan. Component of the dystrophin-associated glycoprotein complex which accumulates at the neuromuscular junction (NMJ) and at a variety of synapses in the peripheral and central nervous systems and has a structural function in stabilizing the sarcolemma. Also implicated in signaling events and synaptic transmission. This is Dystrophin from Homo sapiens (Human).